Reading from the N-terminus, the 525-residue chain is GMP synthase [glutamine-hydrolyzing] (525 aa).

The Glutamine amidotransferase type-1 domain occupies 9–207; the sequence is RILILDFGSQ…VSDICGCEKQ (199 aa). Catalysis depends on C86, which acts as the Nucleophile. Residues H181 and E183 contribute to the active site. In terms of domain architecture, GMPS ATP-PPase spans 208–400; it reads WTPAKIIDDA…LGLPYNMLYR (193 aa). An ATP-binding site is contributed by 235–241; that stretch reads SGGVDSS.

Homodimer.

The catalysed reaction is XMP + L-glutamine + ATP + H2O = GMP + L-glutamate + AMP + diphosphate + 2 H(+). It participates in purine metabolism; GMP biosynthesis; GMP from XMP (L-Gln route): step 1/1. Catalyzes the synthesis of GMP from XMP. The sequence is that of GMP synthase [glutamine-hydrolyzing] from Idiomarina loihiensis (strain ATCC BAA-735 / DSM 15497 / L2-TR).